Consider the following 137-residue polypeptide: Large ribosomal subunit protein eL28 (137 aa).

Position 2 is an N-acetylserine (serine 2). Residues lysine 58 and lysine 65 each participate in a glycyl lysine isopeptide (Lys-Gly) (interchain with G-Cter in SUMO2) cross-link. Serine 115 is modified (phosphoserine).

The protein belongs to the eukaryotic ribosomal protein eL28 family. Component of the large ribosomal subunit.

Its subcellular location is the cytoplasm. Component of the large ribosomal subunit. The ribosome is a large ribonucleoprotein complex responsible for the synthesis of proteins in the cell. In Rattus norvegicus (Rat), this protein is Large ribosomal subunit protein eL28 (Rpl28).